A 378-amino-acid chain; its full sequence is Deoxyhypusine synthase (378 aa).

Residues 107–111 (SNLIS), 133–135 (SAG), Glu139, and Asp253 contribute to the NAD(+) site. 138 to 139 (EE) contributes to the spermidine binding site. Asp258 is a spermidine binding site. Residue Gly300 coordinates NAD(+). His305 is a binding site for spermidine. NAD(+) is bound at residue 325–326 (TG). Spermidine is bound by residues 331-333 (GSD) and 340-346 (EAISWGK). The active-site Nucleophile is Lys346. 359-360 (DA) contributes to the NAD(+) binding site.

It belongs to the deoxyhypusine synthase family. NAD(+) serves as cofactor.

It carries out the reaction [eIF5A protein]-L-lysine + spermidine = [eIF5A protein]-deoxyhypusine + propane-1,3-diamine. Its pathway is protein modification; eIF5A hypusination. Its function is as follows. Catalyzes the NAD-dependent oxidative cleavage of spermidine and the subsequent transfer of the butylamine moiety of spermidine to the epsilon-amino group of a specific lysine residue of the eIF-5A precursor protein to form the intermediate deoxyhypusine residue. The sequence is that of Deoxyhypusine synthase (DYS1) from Debaryomyces hansenii (strain ATCC 36239 / CBS 767 / BCRC 21394 / JCM 1990 / NBRC 0083 / IGC 2968) (Yeast).